A 650-amino-acid polypeptide reads, in one-letter code: Probable acyl-CoA dehydrogenase FadE10 (650 aa).

Positions 1 to 23 (MAQQTQVTEEQARALAEESRESG) are disordered. Over residues 10–23 (EQARALAEESRESG) the composition is skewed to basic and acidic residues. The Proton acceptor role is filled by Glu422.

Belongs to the acyl-CoA dehydrogenase family. The cofactor is FAD.

The enzyme catalyses a 2,3-saturated acyl-CoA + A = a 2,3-dehydroacyl-CoA + AH2. The protein is Probable acyl-CoA dehydrogenase FadE10 (fadE10) of Mycobacterium tuberculosis (strain CDC 1551 / Oshkosh).